Reading from the N-terminus, the 91-residue chain is Small ribosomal subunit protein uS15 (91 aa).

This sequence belongs to the universal ribosomal protein uS15 family. In terms of assembly, part of the 30S ribosomal subunit. Forms a bridge to the 50S subunit in the 70S ribosome, contacting the 23S rRNA.

In terms of biological role, one of the primary rRNA binding proteins, it binds directly to 16S rRNA where it helps nucleate assembly of the platform of the 30S subunit by binding and bridging several RNA helices of the 16S rRNA. Functionally, forms an intersubunit bridge (bridge B4) with the 23S rRNA of the 50S subunit in the ribosome. The chain is Small ribosomal subunit protein uS15 from Rickettsia felis (strain ATCC VR-1525 / URRWXCal2) (Rickettsia azadi).